A 615-amino-acid polypeptide reads, in one-letter code: Nuclear receptor subfamily 1 group D member 1 (615 aa).

Residues 1-12 (MTTLDSNNNTGG) are compositionally biased toward polar residues. A required for phosphorylation by CSNK1E and cytoplasmic localization region spans residues 1–70 (MTTLDSNNNT…TQDPARSFGT (70 aa)). The interval 1 to 120 (MTTLDSNNNT…SSRVSPSKGT (120 aa)) is disordered. The tract at residues 1–129 (MTTLDSNNNT…TSNITKLNGM (129 aa)) is modulating. Low complexity predominate over residues 14–34 (ITYIGSSGSSPSRTSPESLYS). The segment covering 35-48 (DSSNGSFQSLTQGC) has biased composition (polar residues). The crucial for activation of GJA1 stretch occupies residues 49 to 285 (PTYFPPSPTG…PPRSPSPEPT (237 aa)). Phosphoserine; by GSK3-beta occurs at positions 55 and 59. A compositionally biased stretch (low complexity) spans 72–103 (PPSLSDDSSPSSASSSSSSSSSSFYNGSPPGS). Residues 130–206 (VLLCKVCGDV…VGMSRDAVRF (77 aa)) constitute a DNA-binding region (nuclear receptor). 2 NR C4-type zinc fingers span residues 133–153 (CKVCGDVASGFHYGVHACEGC) and 170–194 (CLKNENCSIVRINRNRCQQCRFKKC). 2 positions are modified to N6-acetyllysine; by KAT5: Lys-192 and Lys-193. Disordered stretches follow at residues 235 to 287 (LCPL…PTVE), 312 to 337 (PGNFNANHASGSPPATTPQCWESQGC), and 357 to 385 (NGLRQGPSSYPPTWPSGPAHHSCHQPNSN). Over residues 253-262 (PSPPPAPAPT) the composition is skewed to pro residues. Thr-275 bears the Phosphothreonine; by CDK1 mark. In terms of domain architecture, NR LBD spans 285-615 (TVEDVISQVA…KLLSFRVDAQ (331 aa)). N6-acetyllysine is present on Lys-401. Cys-419 contributes to the heme binding site. Lys-592 bears the N6-acetyllysine mark. A heme-binding site is contributed by His-603.

The protein belongs to the nuclear hormone receptor family. NR1 subfamily. In terms of assembly, binds DNA as a monomer or a homodimer. Interacts with C1D, NR2E3, SP1 and ZNHIT1. Interacts with OPHN1 (via C-terminus). Interacts with PER2; the interaction associates PER2 to BMAL1 promoter region. Interacts with CRY1. Interacts with CCAR2. Interacts with SIAH2. Interacts with FBXW7 and CDK1. Interacts with HUWE1. Interacts with NR0B2. Interacts with NFIL3. Interacts (via domain NR LBD) with HSP90AA1 and HSP90AB1. Ubiquitinated, leading to its proteasomal degradation. Ubiquitinated by the SCF(FBXW7) complex when phosphorylated by CDK1 leading to its proteasomal degradation. Ubiquitinated by SIAH2; leading to its proteasomal degradation. Rapidly ubiquitinated in response to inflammatory triggers and sumoylation is a prerequisite to its ubiquitination. Post-translationally, sumoylated by UBE2I, desumoylated by SENP1, and sumoylation is a prerequisite to its ubiquitination. In terms of processing, phosphorylated by CSNK1E; phosphorylation enhances its cytoplasmic localization. Undergoes lysosome-mediated degradation in a time-dependent manner in the liver.

The protein localises to the nucleus. The protein resides in the cytoplasm. It localises to the cell projection. Its subcellular location is the dendrite. It is found in the dendritic spine. Functionally, transcriptional repressor which coordinates circadian rhythm and metabolic pathways in a heme-dependent manner. Integral component of the complex transcription machinery that governs circadian rhythmicity and forms a critical negative limb of the circadian clock by directly repressing the expression of core clock components BMAL1, CLOCK and CRY1. Also regulates genes involved in metabolic functions, including lipid and bile acid metabolism, adipogenesis, gluconeogenesis and the macrophage inflammatory response. Acts as a receptor for heme which stimulates its interaction with the NCOR1/HDAC3 corepressor complex, enhancing transcriptional repression. Recognizes two classes of DNA response elements within the promoter of its target genes and can bind to DNA as either monomers or homodimers, depending on the nature of the response element. Binds as a monomer to a response element composed of the consensus half-site motif 5'-[A/G]GGTCA-3' preceded by an A/T-rich 5' sequence (RevRE), or as a homodimer to a direct repeat of the core motif spaced by two nucleotides (RevDR-2). Acts as a potent competitive repressor of ROR alpha (RORA) function and regulates the levels of its ligand heme by repressing the expression of PPARGC1A, a potent inducer of heme synthesis. Regulates lipid metabolism by repressing the expression of APOC3 and by influencing the activity of sterol response element binding proteins (SREBPs); represses INSIG2 which interferes with the proteolytic activation of SREBPs which in turn govern the rhythmic expression of enzymes with key functions in sterol and fatty acid synthesis. Regulates gluconeogenesis via repression of G6PC1 and PEPCK and adipocyte differentiation via repression of PPARG. Regulates glucagon release in pancreatic alpha-cells via the AMPK-NAMPT-SIRT1 pathway and the proliferation, glucose-induced insulin secretion and expression of key lipogenic genes in pancreatic-beta cells. Positively regulates bile acid synthesis by increasing hepatic expression of CYP7A1 via repression of NR0B2 and NFIL3 which are negative regulators of CYP7A1. Modulates skeletal muscle oxidative capacity by regulating mitochondrial biogenesis and autophagy; controls mitochondrial biogenesis and respiration by interfering with the STK11-PRKAA1/2-SIRT1-PPARGC1A signaling pathway. Represses the expression of SERPINE1/PAI1, an important modulator of cardiovascular disease and the expression of inflammatory cytokines and chemokines in macrophages. Represses gene expression at a distance in macrophages by inhibiting the transcription of enhancer-derived RNAs (eRNAs). Plays a role in the circadian regulation of body temperature and negatively regulates thermogenic transcriptional programs in brown adipose tissue (BAT); imposes a circadian oscillation in BAT activity, increasing body temperature when awake and depressing thermogenesis during sleep. In concert with NR2E3, regulates transcriptional networks critical for photoreceptor development and function. In addition to its activity as a repressor, can also act as a transcriptional activator. In the ovarian granulosa cells acts as a transcriptional activator of STAR which plays a role in steroid biosynthesis. In collaboration with SP1, activates GJA1 transcription in a heme-independent manner. Represses the transcription of CYP2B10, CYP4A10 and CYP4A14. Represses the transcription of CES2. Represses and regulates the circadian expression of TSHB in a NCOR1-dependent manner. Negatively regulates the protein stability of NR3C1 and influences the time-dependent subcellular distribution of NR3C1, thereby affecting its transcriptional regulatory activity. Plays a critical role in the circadian control of neutrophilic inflammation in the lung; under resting, non-stress conditions, acts as a rhythmic repressor to limit inflammatory activity whereas in the presence of inflammatory triggers undergoes ubiquitin-mediated degradation thereby relieving inhibition of the inflammatory response. Plays a key role in the circadian regulation of microglial activation and neuroinflammation; suppresses microglial activation through the NF-kappaB pathway in the central nervous system. Plays a role in the regulation of the diurnal rhythms of lipid and protein metabolism in the skeletal muscle via transcriptional repression of genes controlling lipid and amino acid metabolism in the muscle. The polypeptide is Nuclear receptor subfamily 1 group D member 1 (Nr1d1) (Rattus norvegicus (Rat)).